Reading from the N-terminus, the 899-residue chain is Calcium-transporting ATPase 1 (899 aa).

4 helical membrane passes run 59 to 79 (FVKD…VTLG), 80 to 100 (NIDD…VGFV), 247 to 267 (QLSL…FFQG), and 282 to 302 (VAAI…LGVL). Aspartate 329 serves as the catalytic 4-aspartylphosphate intermediate. Helical transmembrane passes span 688–708 (FQLS…VFGF), 757–777 (QLLQ…IVVF), 827–847 (FNIA…ASPF), and 854–874 (EAIG…VLWV). Serine 892 is modified (phosphoserine).

Belongs to the cation transport ATPase (P-type) (TC 3.A.3) family.

It is found in the endoplasmic reticulum membrane. The catalysed reaction is Ca(2+)(in) + ATP + H2O = Ca(2+)(out) + ADP + phosphate + H(+). In terms of biological role, transports calcium and manganese ions into the cell. Regulates cell morphogenesis through control of manganese and calcium homeostasis. This is Calcium-transporting ATPase 1 (pmr1) from Schizosaccharomyces pombe (strain 972 / ATCC 24843) (Fission yeast).